A 353-amino-acid polypeptide reads, in one-letter code: Ribosome biogenesis protein BRX1 homolog (353 aa).

Residues 1 to 10 (MAATKRKRRG) show a composition bias toward basic residues. The tract at residues 1-46 (MAATKRKRRGGFAVQAKKPKRNEKDAEPPAKRHATAEEVEEEERDR) is disordered. Residues 22–36 (NEKDAEPPAKRHATA) are compositionally biased toward basic and acidic residues. The region spanning 60–249 (ERILIFSSRG…LIKIFQGSFG (190 aa)) is the Brix domain. Lys-160 is covalently cross-linked (Glycyl lysine isopeptide (Lys-Gly) (interchain with G-Cter in SUMO2)). Position 261 is a phosphoserine (Ser-261). An N6-acetyllysine modification is found at Lys-276. Residues Lys-314 and Lys-322 each participate in a glycyl lysine isopeptide (Lys-Gly) (interchain with G-Cter in SUMO2) cross-link.

Belongs to the BRX1 family.

It localises to the nucleus. The protein resides in the nucleolus. Functionally, required for biogenesis of the 60S ribosomal subunit. The polypeptide is Ribosome biogenesis protein BRX1 homolog (BRIX1) (Pongo abelii (Sumatran orangutan)).